Reading from the N-terminus, the 289-residue chain is Ribosomal RNA small subunit methyltransferase A (289 aa).

6 residues coordinate S-adenosyl-L-methionine: Asn28, Leu30, Gly55, Glu77, Asp103, and Asn122.

It belongs to the class I-like SAM-binding methyltransferase superfamily. rRNA adenine N(6)-methyltransferase family. RsmA subfamily.

It localises to the cytoplasm. It catalyses the reaction adenosine(1518)/adenosine(1519) in 16S rRNA + 4 S-adenosyl-L-methionine = N(6)-dimethyladenosine(1518)/N(6)-dimethyladenosine(1519) in 16S rRNA + 4 S-adenosyl-L-homocysteine + 4 H(+). Functionally, specifically dimethylates two adjacent adenosines (A1518 and A1519) in the loop of a conserved hairpin near the 3'-end of 16S rRNA in the 30S particle. May play a critical role in biogenesis of 30S subunits. This chain is Ribosomal RNA small subunit methyltransferase A, found in Jannaschia sp. (strain CCS1).